A 308-amino-acid chain; its full sequence is Aspartate carbamoyltransferase catalytic subunit (308 aa).

Residues arginine 57 and threonine 58 each contribute to the carbamoyl phosphate site. Residue lysine 86 coordinates L-aspartate. Carbamoyl phosphate is bound by residues arginine 107, histidine 135, and glutamine 138. Positions 168 and 228 each coordinate L-aspartate. 2 residues coordinate carbamoyl phosphate: leucine 267 and proline 268.

Belongs to the aspartate/ornithine carbamoyltransferase superfamily. ATCase family. Heterododecamer (2C3:3R2) of six catalytic PyrB chains organized as two trimers (C3), and six regulatory PyrI chains organized as three dimers (R2).

It carries out the reaction carbamoyl phosphate + L-aspartate = N-carbamoyl-L-aspartate + phosphate + H(+). It functions in the pathway pyrimidine metabolism; UMP biosynthesis via de novo pathway; (S)-dihydroorotate from bicarbonate: step 2/3. In terms of biological role, catalyzes the condensation of carbamoyl phosphate and aspartate to form carbamoyl aspartate and inorganic phosphate, the committed step in the de novo pyrimidine nucleotide biosynthesis pathway. This Leptospira interrogans serogroup Icterohaemorrhagiae serovar Lai (strain 56601) protein is Aspartate carbamoyltransferase catalytic subunit.